Consider the following 87-residue polypeptide: uncharacterized protein (87 aa).

Transmembrane regions (helical) follow at residues 7–27 (LFFIQIVISIFNSHLAVLYSI) and 64–84 (GINIFSFSISLFLIFLTIPLF).

It is found in the membrane. This is an uncharacterized protein from Schizosaccharomyces pombe (strain 972 / ATCC 24843) (Fission yeast).